The sequence spans 97 residues: Putative septation protein SpoVG (97 aa).

This sequence belongs to the SpoVG family.

Essential for sporulation. Interferes with or is a negative regulator of the pathway leading to asymmetric septation. The protein is Putative septation protein SpoVG of Bacillus cytotoxicus (strain DSM 22905 / CIP 110041 / 391-98 / NVH 391-98).